The sequence spans 358 residues: MSISHIFGPQQPQYSSVTASAHGKVNLHLGVGPAREDGYHELDTIFQAVSLKEEVTVALRDARGAQDAEAVQVAEAAQEAADAAPCTWSVSGFDSHLVPQDSSNLAWKAVAAIQKLARQAHVPWADAPVHIHIDKGIPVAGGMAGGSADAAAALVAATELYFPDSRASRRPDGAQLSDIAAELGADVPFCLLGGTARGTGKGENLMPVIATGTYHWAIATDKRGLSTPEVFKQLDQQRAAASAASPKAARAGSPEGLIAALRTGNPEEVGKLLVNDLQAPAISLLPSLRETLKAAEEAGAIAAIVSGSGPTVAMLCASADDAVEVATAVSVAGKASSTMTTSSPAAAAGVIKREEVLE.

The active site involves Lys24. 138 to 148 serves as a coordination point for ATP; it reads PVAGGMAGGSA. Residue Asp186 is part of the active site.

The protein belongs to the GHMP kinase family. IspE subfamily.

It carries out the reaction 4-CDP-2-C-methyl-D-erythritol + ATP = 4-CDP-2-C-methyl-D-erythritol 2-phosphate + ADP + H(+). Its pathway is isoprenoid biosynthesis; isopentenyl diphosphate biosynthesis via DXP pathway; isopentenyl diphosphate from 1-deoxy-D-xylulose 5-phosphate: step 3/6. In terms of biological role, catalyzes the phosphorylation of the position 2 hydroxy group of 4-diphosphocytidyl-2C-methyl-D-erythritol. In Corynebacterium jeikeium (strain K411), this protein is 4-diphosphocytidyl-2-C-methyl-D-erythritol kinase.